An 85-amino-acid chain; its full sequence is Toxin BmKITc (85 aa).

The signal sequence occupies residues 1-21 (MKLFLLLVIFASMLNDGLVNA). One can recognise an LCN-type CS-alpha/beta domain in the interval 22-82 (DGYIRGSDGC…KWKYESNTCG (61 aa)). 4 disulfide bridges follow: C31–C81, C35–C56, C42–C63, and C46–C65.

It belongs to the long (4 C-C) scorpion toxin superfamily. Sodium channel inhibitor family. Beta subfamily. As to expression, expressed by the venom gland.

The protein resides in the secreted. Functionally, depressant insect beta-toxins cause a transient contraction paralysis followed by a slow flaccid paralysis. They bind voltage-independently at site-4 of sodium channels (Nav) and shift the voltage of activation toward more negative potentials thereby affecting sodium channel activation and promoting spontaneous and repetitive firing. The sequence is that of Toxin BmKITc from Olivierus martensii (Manchurian scorpion).